Here is a 671-residue protein sequence, read N- to C-terminus: UvrABC system protein B (671 aa).

The Helicase ATP-binding domain maps to 35 to 423 (KAIIENKKHQ…NHQVVQQIIR (389 aa)). An ATP-binding site is contributed by 48–55 (GATGTGKT). A Beta-hairpin motif is present at residues 101–124 (NFDFFQPEAYIPSKDLYIDKDSRQ). The Helicase C-terminal domain occupies 440–602 (QIDDIINEIH…IVPKTISKAI (163 aa)). Residues 632 to 667 (QQTIDNLRQEMLQAAKELDFERAAILRDTIIELENE) enclose the UVR domain.

It belongs to the UvrB family. In terms of assembly, forms a heterotetramer with UvrA during the search for lesions. Interacts with UvrC in an incision complex.

The protein resides in the cytoplasm. Its function is as follows. The UvrABC repair system catalyzes the recognition and processing of DNA lesions. A damage recognition complex composed of 2 UvrA and 2 UvrB subunits scans DNA for abnormalities. Upon binding of the UvrA(2)B(2) complex to a putative damaged site, the DNA wraps around one UvrB monomer. DNA wrap is dependent on ATP binding by UvrB and probably causes local melting of the DNA helix, facilitating insertion of UvrB beta-hairpin between the DNA strands. Then UvrB probes one DNA strand for the presence of a lesion. If a lesion is found the UvrA subunits dissociate and the UvrB-DNA preincision complex is formed. This complex is subsequently bound by UvrC and the second UvrB is released. If no lesion is found, the DNA wraps around the other UvrB subunit that will check the other stand for damage. This Mycoplasma mycoides subsp. mycoides SC (strain CCUG 32753 / NCTC 10114 / PG1) protein is UvrABC system protein B.